The sequence spans 330 residues: Pantothenate synthetase 2 (330 aa).

Histidine 55 acts as the Proton donor in catalysis. Residues 167–170 (GEKD), valine 196, and 204–207 (ASSR) each bind ATP.

This sequence belongs to the pantothenate synthetase family. In terms of assembly, homodimer.

The protein localises to the cytoplasm. It catalyses the reaction (R)-pantoate + beta-alanine + ATP = (R)-pantothenate + AMP + diphosphate + H(+). Its pathway is cofactor biosynthesis; (R)-pantothenate biosynthesis; (R)-pantothenate from (R)-pantoate and beta-alanine: step 1/1. Functionally, catalyzes the condensation of pantoate with beta-alanine in an ATP-dependent reaction via a pantoyl-adenylate intermediate. This chain is Pantothenate synthetase 2, found in Frankia alni (strain DSM 45986 / CECT 9034 / ACN14a).